The chain runs to 117 residues: Ribonuclease P protein component (117 aa).

It belongs to the RnpA family. Consists of a catalytic RNA component (M1 or rnpB) and a protein subunit.

It carries out the reaction Endonucleolytic cleavage of RNA, removing 5'-extranucleotides from tRNA precursor.. RNaseP catalyzes the removal of the 5'-leader sequence from pre-tRNA to produce the mature 5'-terminus. It can also cleave other RNA substrates such as 4.5S RNA. The protein component plays an auxiliary but essential role in vivo by binding to the 5'-leader sequence and broadening the substrate specificity of the ribozyme. The polypeptide is Ribonuclease P protein component (Aliivibrio fischeri (strain ATCC 700601 / ES114) (Vibrio fischeri)).